The primary structure comprises 239 residues: Phosphoribosylaminoimidazole-succinocarboxamide synthase (239 aa).

Belongs to the SAICAR synthetase family.

It catalyses the reaction 5-amino-1-(5-phospho-D-ribosyl)imidazole-4-carboxylate + L-aspartate + ATP = (2S)-2-[5-amino-1-(5-phospho-beta-D-ribosyl)imidazole-4-carboxamido]succinate + ADP + phosphate + 2 H(+). Its pathway is purine metabolism; IMP biosynthesis via de novo pathway; 5-amino-1-(5-phospho-D-ribosyl)imidazole-4-carboxamide from 5-amino-1-(5-phospho-D-ribosyl)imidazole-4-carboxylate: step 1/2. The chain is Phosphoribosylaminoimidazole-succinocarboxamide synthase from Chlorobium luteolum (strain DSM 273 / BCRC 81028 / 2530) (Pelodictyon luteolum).